Here is a 479-residue protein sequence, read N- to C-terminus: Bifunctional aspartate aminotransferase and glutamate/aspartate-prephenate aminotransferase (479 aa).

The N-terminal 79 residues, 1–79 (MAATTTTSSS…VEVDISLSPR (79 aa)), are a transit peptide targeting the chloroplast. Gly111 provides a ligand contact to L-aspartate. 172-173 (AK) lines the pyridoxal 5'-phosphate pocket. Positions 197 and 247 each coordinate L-aspartate. Pyridoxal 5'-phosphate-binding positions include Asn247, Tyr279, and 307 to 309 (GFS). An N6-(pyridoxal phosphate)lysine modification is found at Lys310. Arg318 lines the pyridoxal 5'-phosphate pocket. An L-aspartate-binding site is contributed by Arg449.

Belongs to the class-I pyridoxal-phosphate-dependent aminotransferase family. Homodimer. The cofactor is pyridoxal 5'-phosphate. As to expression, expressed in flowers, pistils, stamens, ovaries and at lower levels in leaves and sepals.

Its subcellular location is the plastid. It is found in the chloroplast. The catalysed reaction is L-aspartate + 2-oxoglutarate = oxaloacetate + L-glutamate. It catalyses the reaction L-arogenate + oxaloacetate = prephenate + L-aspartate. It carries out the reaction L-arogenate + 2-oxoglutarate = prephenate + L-glutamate. Its pathway is amino-acid biosynthesis; L-phenylalanine biosynthesis; L-arogenate from prephenate (L-Asp route): step 1/1. It participates in amino-acid biosynthesis; L-phenylalanine biosynthesis; L-arogenate from prephenate (L-Glu route): step 1/1. Functionally, prokaryotic-type aspartate aminotransferase. Also has a prenate transaminase activity. Involved in the aromatic amino acids biosynthesis pathway via the arogenate route. Required for the transamination of prephenate into arogenate. Can use 2-oxoglutarate, oxaloacetate and prephenate as substrates, but not phenylpyruvate or 4-hydroxyphenylpyruvate. This is Bifunctional aspartate aminotransferase and glutamate/aspartate-prephenate aminotransferase from Petunia hybrida (Petunia).